A 367-amino-acid polypeptide reads, in one-letter code: Quinolinate synthase (367 aa).

2 residues coordinate iminosuccinate: histidine 45 and serine 62. Cysteine 109 serves as a coordination point for [4Fe-4S] cluster. Residues 140–142 and serine 161 contribute to the iminosuccinate site; that span reads YVN. Cysteine 229 lines the [4Fe-4S] cluster pocket. Iminosuccinate-binding positions include 255–257 and threonine 272; that span reads HPE. Cysteine 319 lines the [4Fe-4S] cluster pocket.

This sequence belongs to the quinolinate synthase family. Type 3 subfamily. [4Fe-4S] cluster is required as a cofactor.

The protein localises to the cytoplasm. The catalysed reaction is iminosuccinate + dihydroxyacetone phosphate = quinolinate + phosphate + 2 H2O + H(+). The protein operates within cofactor biosynthesis; NAD(+) biosynthesis; quinolinate from iminoaspartate: step 1/1. Its function is as follows. Catalyzes the condensation of iminoaspartate with dihydroxyacetone phosphate to form quinolinate. In Lysinibacillus sphaericus (strain C3-41), this protein is Quinolinate synthase.